Here is a 74-residue protein sequence, read N- to C-terminus: MEGDLAHIGAGLAAIGSGAAAIGVGNVAGNFLAGALRNPSAAASQTATLFIGIAFAEALGIFAFLVALLLMFAV.

Transmembrane regions (helical) follow at residues 5 to 25 and 49 to 69; these read LAHI…IGVG and LFIG…VALL.

Belongs to the ATPase C chain family. As to quaternary structure, F-type ATPases have 2 components, F(1) - the catalytic core - and F(0) - the membrane proton channel. F(1) has five subunits: alpha(3), beta(3), gamma(1), delta(1), epsilon(1). F(0) has three main subunits: a(1), b(2) and c(10-14). The alpha and beta chains form an alternating ring which encloses part of the gamma chain. F(1) is attached to F(0) by a central stalk formed by the gamma and epsilon chains, while a peripheral stalk is formed by the delta and b chains.

The protein localises to the cell inner membrane. F(1)F(0) ATP synthase produces ATP from ADP in the presence of a proton or sodium gradient. F-type ATPases consist of two structural domains, F(1) containing the extramembraneous catalytic core and F(0) containing the membrane proton channel, linked together by a central stalk and a peripheral stalk. During catalysis, ATP synthesis in the catalytic domain of F(1) is coupled via a rotary mechanism of the central stalk subunits to proton translocation. Its function is as follows. Key component of the F(0) channel; it plays a direct role in translocation across the membrane. A homomeric c-ring of between 10-14 subunits forms the central stalk rotor element with the F(1) delta and epsilon subunits. The protein is ATP synthase subunit c of Ruegeria pomeroyi (strain ATCC 700808 / DSM 15171 / DSS-3) (Silicibacter pomeroyi).